We begin with the raw amino-acid sequence, 192 residues long: Ribosomal RNA large subunit methyltransferase E (192 aa).

The S-adenosyl-L-methionine site is built by Gly48, Phe50, Asp67, Asp85, and Asp107. The active-site Proton acceptor is the Lys147.

This sequence belongs to the class I-like SAM-binding methyltransferase superfamily. RNA methyltransferase RlmE family.

The protein resides in the cytoplasm. It catalyses the reaction uridine(2552) in 23S rRNA + S-adenosyl-L-methionine = 2'-O-methyluridine(2552) in 23S rRNA + S-adenosyl-L-homocysteine + H(+). Its function is as follows. Specifically methylates the uridine in position 2552 of 23S rRNA at the 2'-O position of the ribose in the fully assembled 50S ribosomal subunit. The sequence is that of Ribosomal RNA large subunit methyltransferase E from Borrelia garinii subsp. bavariensis (strain ATCC BAA-2496 / DSM 23469 / PBi) (Borreliella bavariensis).